The chain runs to 256 residues: Tetraspanin-32 (256 aa).

4 consecutive transmembrane segments (helical) span residues 15–35 (LITNFLVLLLGLSMATMVVVI), 61–81 (AFYVGISLAGLLSLGAALSTI), 90–110 (LMAAGFLCFALSFCILVQVAF), and 203–223 (CTSLALTVYAMMLCAFLWFAI).

The protein belongs to the tetraspanin (TM4SF) family. As to expression, expressed exclusively in hematopoietic tissues. Expression detected in spleen, thymus, bone marrow and peripheral blood leukocytes but not in heart, brain, lung, liver, kidney or testis.

It localises to the membrane. This chain is Tetraspanin-32 (Tspan32), found in Mus musculus (Mouse).